The following is a 430-amino-acid chain: UDP-N-acetylglucosamine 1-carboxyvinyltransferase (430 aa).

Residue 22-23 (KN) coordinates phosphoenolpyruvate. Arg102 provides a ligand contact to UDP-N-acetyl-alpha-D-glucosamine. Catalysis depends on Cys126, which acts as the Proton donor. Position 126 is a 2-(S-cysteinyl)pyruvic acid O-phosphothioketal (Cys126). UDP-N-acetyl-alpha-D-glucosamine-binding positions include 131-135 (RPVDL), 172-175 (KVSV), Asp317, and Ile339.

Belongs to the EPSP synthase family. MurA subfamily.

The protein localises to the cytoplasm. The enzyme catalyses phosphoenolpyruvate + UDP-N-acetyl-alpha-D-glucosamine = UDP-N-acetyl-3-O-(1-carboxyvinyl)-alpha-D-glucosamine + phosphate. It functions in the pathway cell wall biogenesis; peptidoglycan biosynthesis. In terms of biological role, cell wall formation. Adds enolpyruvyl to UDP-N-acetylglucosamine. This is UDP-N-acetylglucosamine 1-carboxyvinyltransferase from Rhizobium meliloti (strain 1021) (Ensifer meliloti).